A 215-amino-acid chain; its full sequence is Pyrrolidone-carboxylate peptidase (215 aa).

Catalysis depends on residues glutamate 81, cysteine 144, and histidine 168.

Belongs to the peptidase C15 family. In terms of assembly, homotetramer.

It is found in the cytoplasm. It carries out the reaction Release of an N-terminal pyroglutamyl group from a polypeptide, the second amino acid generally not being Pro.. In terms of biological role, removes 5-oxoproline from various penultimate amino acid residues except L-proline. The polypeptide is Pyrrolidone-carboxylate peptidase (pcp) (Bacillus amyloliquefaciens (Bacillus velezensis)).